Here is a 348-residue protein sequence, read N- to C-terminus: D-erythrose-4-phosphate dehydrogenase (348 aa).

NAD(+) is bound by residues 12–13 and Arg81; that span reads RI. Residues 154 to 156, Arg200, 213 to 214, and Arg236 each bind substrate; these read SCT and TK. The Nucleophile role is filled by Cys155. An NAD(+)-binding site is contributed by Asn318.

It belongs to the glyceraldehyde-3-phosphate dehydrogenase family. Epd subfamily. Homotetramer.

It localises to the cytoplasm. The enzyme catalyses D-erythrose 4-phosphate + NAD(+) + H2O = 4-phospho-D-erythronate + NADH + 2 H(+). It functions in the pathway cofactor biosynthesis; pyridoxine 5'-phosphate biosynthesis; pyridoxine 5'-phosphate from D-erythrose 4-phosphate: step 1/5. Its function is as follows. Catalyzes the NAD-dependent conversion of D-erythrose 4-phosphate to 4-phosphoerythronate. The polypeptide is D-erythrose-4-phosphate dehydrogenase (Salmonella paratyphi B (strain ATCC BAA-1250 / SPB7)).